The following is a 451-amino-acid chain: UPF0210 protein NGO_1297 (451 aa).

The protein belongs to the UPF0210 family. Homodimer.

This Neisseria gonorrhoeae (strain ATCC 700825 / FA 1090) protein is UPF0210 protein NGO_1297.